Reading from the N-terminus, the 482-residue chain is Nicotine dehydrogenase (482 aa).

Positions 1–38 (MSDKTKTNEGFSRRSFIGSAAVVTAGVAGLGAIDAASA) form a signal peptide, tat-type signal. FAD-binding residues include Ala64, Glu83, Ala84, Arg85, Arg91, Trp108, and Val279. Residue Thr381 coordinates (S)-nicotine. FAD contacts are provided by Ala453, Asn462, and Ile463.

It belongs to the flavin monoamine oxidase family. In terms of assembly, monomer in solution. Homodimer in solution. Forms homodimers in the crystal. FAD serves as cofactor. In terms of processing, predicted to be exported by the Tat system. The position of the signal peptide cleavage has not been experimentally proven.

It is found in the periplasm. It catalyses the reaction (S)-nicotine + 2 Fe(III)-[cytochrome c] = N-methylmyosmine + 2 Fe(II)-[cytochrome c] + 2 H(+). It functions in the pathway alkaloid degradation; nicotine degradation. The catalytic rate is not significantly affected by pH. Functionally, involved in nicotine degradation. Catalyzes the conversion of nicotine to N-methylmyosmine. N-methylmyosmine undergoes spontaneous hydrolysis to form pseudooxynicotine (PN). S-nicotine is the optimal substrate. Has lower activity with some nicotine analogs, but shows no activity towards neurotransmitters, including serotonin, dopamine, and norepinephrine, nicotine metabolites and common neuroactive drugs. The enzyme is stereospecific with poor activity with (R)-nicotine as the substrate. The c-type cytochrome protein CycN is the physiological electron acceptor. O(2) is a poor electron acceptor. The polypeptide is Nicotine dehydrogenase (Pseudomonas putida (strain DSM 28022 / S16)).